The following is a 218-amino-acid chain: Esterase FPY3 (218 aa).

Residues Ser95, Asp163, and His190 each act as charge relay system in the active site.

This sequence belongs to the LovG family.

It functions in the pathway secondary metabolite biosynthesis. Functionally, esterase; part of the gene cluster that mediates the biosynthesis of the gamma-pyrones fusapyrone (FPY) and deoxyfusapyrone (dFPY). FPY is an undecaketide and thus likely synthesized by the polyketide synthase FPY1 from acetyl-CoA functioning as starter unit and the addition of 10 malonyl-CoA extender units by successive Claisen-condensations. Next to this, FPY shares some rare features: C-glycosylated 4-deoxyglucose at C-3, a gem-dimethyl group at C-13, and an alpha-beta to beta-gamma double bond shift at C-20. During FPY biosynthesis mono-C-methyl groups are transferred to the tetra-, penta-, hexa- and heptaketide, while two C-methyl groups are transferred to the nonaketide, suggesting that the CMet domain is programmed to selectively catalyze two successive C-alpha-methylation reactions of the nonaketide, while other alpha-carbons are non- or mono-methylated only. While the origin of the 4'-deoxyglucose moiety remains opaque, its transfer to C-3 is most likely mediated by the C-glycosyltransferase FPY2. Next to this, the hydroxyl group present at C-33 and discriminating between FPY and dFPY, is likely to be installed by the cytochrome P450 monooxygenase FPY7. No putative function can be predicted for the remaining genes FPY3-FPY6. The protein is Esterase FPY3 of Fusarium mangiferae (Mango malformation disease fungus).